The chain runs to 464 residues: Chromosomal replication initiator protein DnaA (464 aa).

Positions 1-82 (MKNAAELWHN…GSRLDIQFIE (82 aa)) are domain I, interacts with DnaA modulators. Positions 82–125 (EEGQAKHMLDRQNEEVEVMEVAPAKTKAQKTPKSSDELVMSELG) are domain II. The interval 126–342 (QLNEKYTFDT…GALTRVIAYA (217 aa)) is domain III, AAA+ region. The ATP site is built by G170, G172, K173, and T174. Residues 343–464 (NLVGRTIDPN…EQIKHELKHS (122 aa)) form a domain IV, binds dsDNA region.

Belongs to the DnaA family. In terms of assembly, oligomerizes as a right-handed, spiral filament on DNA at oriC.

It is found in the cytoplasm. Its function is as follows. Plays an essential role in the initiation and regulation of chromosomal replication. ATP-DnaA binds to the origin of replication (oriC) to initiate formation of the DNA replication initiation complex once per cell cycle. Binds the DnaA box (a 9 base pair repeat at the origin) and separates the double-stranded (ds)DNA. Forms a right-handed helical filament on oriC DNA; dsDNA binds to the exterior of the filament while single-stranded (ss)DNA is stabiized in the filament's interior. The ATP-DnaA-oriC complex binds and stabilizes one strand of the AT-rich DNA unwinding element (DUE), permitting loading of DNA polymerase. After initiation quickly degrades to an ADP-DnaA complex that is not apt for DNA replication. Binds acidic phospholipids. This is Chromosomal replication initiator protein DnaA from Exiguobacterium sibiricum (strain DSM 17290 / CCUG 55495 / CIP 109462 / JCM 13490 / 255-15).